The sequence spans 889 residues: Phosphatidylinositol 3-kinase VPS34 (889 aa).

One can recognise a C2 PI3K-type domain in the interval 34 to 184; the sequence is ASEKLIDPQL…EWIDELVLKK (151 aa). The region spanning 298-540 is the PIK helical domain; that stretch reads SDKHVKPDAK…ESFLSRLNSN (243 aa). In terms of domain architecture, PI3K/PI4K catalytic spans 607–873; it reads MIDQCNVFKS…LINDSVNALL (267 aa). The tract at residues 613–619 is G-loop; it reads VFKSSLS. The segment at 742-750 is catalytic loop; it reads GVGDRHLDN. An activation loop region spans residues 761–782; that stretch reads HADFGYILGQDPKPFPPLMKLP.

Belongs to the PI3/PI4-kinase family. Type III PI4K subfamily. Component of the autophagy-specific VPS34 PI3-kinase complex I composed of VPS15, VPS30, VPS34, ATG14 and ATG38; and of the VPS34 PI3-kinase complex II composed of VPS15, VPS30, VPS34 and VPS38. Post-translationally, autophosphorylated.

The protein localises to the golgi apparatus. It is found in the trans-Golgi network membrane. It localises to the endosome membrane. It carries out the reaction a 1,2-diacyl-sn-glycero-3-phospho-(1D-myo-inositol) + ATP = a 1,2-diacyl-sn-glycero-3-phospho-(1D-myo-inositol-3-phosphate) + ADP + H(+). In terms of biological role, multifunctional phosphatidylinositol 3-kinase that plays a role in signaling in modulation of host immune response, intracellular survival and virulence. Catalytic subunit of the autophagy-specific VPS34 PI3-kinase complex I essential to recruit the ATG8-phosphatidylinositol conjugate and the ATG12-ATG5 conjugate to the pre-autophagosomal structure. Also involved in endosome-to-Golgi retrograde transport as part of the VPS34 PI3-kinase complex II. This second complex is required for the endosome-to-Golgi retrieval of PEP1 and KEX2, and the recruitment of VPS5 and VPS7, two components of the retromer complex, to endosomal membranes (probably through the synthesis of a specific pool of phosphatidylinositol 3-phosphate recruiting the retromer to the endosomes). Finally, it might also be involved in ethanol tolerance and cell wall integrity. This Candida glabrata (strain ATCC 2001 / BCRC 20586 / JCM 3761 / NBRC 0622 / NRRL Y-65 / CBS 138) (Yeast) protein is Phosphatidylinositol 3-kinase VPS34.